Here is a 220-residue protein sequence, read N- to C-terminus: Chaperone protein TorD (220 aa).

The protein belongs to the TorD/DmsD family. TorD subfamily.

Its subcellular location is the cytoplasm. Its function is as follows. Involved in the biogenesis of TorA. Acts on TorA before the insertion of the molybdenum cofactor and, as a result, probably favors a conformation of the apoenzyme that is competent for acquiring the cofactor. The sequence is that of Chaperone protein TorD from Vibrio cholerae serotype O1 (strain M66-2).